Here is a 346-residue protein sequence, read N- to C-terminus: N-acetyl-gamma-glutamyl-phosphate reductase (346 aa).

Residue cysteine 149 is part of the active site.

It belongs to the NAGSA dehydrogenase family. Type 1 subfamily.

The protein localises to the cytoplasm. It carries out the reaction N-acetyl-L-glutamate 5-semialdehyde + phosphate + NADP(+) = N-acetyl-L-glutamyl 5-phosphate + NADPH + H(+). Its pathway is amino-acid biosynthesis; L-arginine biosynthesis; N(2)-acetyl-L-ornithine from L-glutamate: step 3/4. In terms of biological role, catalyzes the NADPH-dependent reduction of N-acetyl-5-glutamyl phosphate to yield N-acetyl-L-glutamate 5-semialdehyde. This chain is N-acetyl-gamma-glutamyl-phosphate reductase, found in Geobacter sulfurreducens (strain ATCC 51573 / DSM 12127 / PCA).